We begin with the raw amino-acid sequence, 677 residues long: UvrABC system protein B (677 aa).

Residues 24 to 412 (EGVLQGVPAQ…EGIVVEQVIR (389 aa)) form the Helicase ATP-binding domain. 37 to 44 (GVTGSGKT) provides a ligand contact to ATP. Positions 90–113 (YYDYYQPEAYLPNSDTYIEKDLAI) match the Beta-hairpin motif. One can recognise a Helicase C-terminal domain in the interval 429 to 591 (QIDDLMEEIQ…ITPQQIKKAR (163 aa)). The 36-residue stretch at 636–671 (EKSIERTRKLMQEAAKKLEFIEAAQYRNELLKLEDL) folds into the UVR domain.

It belongs to the UvrB family. In terms of assembly, forms a heterotetramer with UvrA during the search for lesions. Interacts with UvrC in an incision complex.

It localises to the cytoplasm. In terms of biological role, the UvrABC repair system catalyzes the recognition and processing of DNA lesions. A damage recognition complex composed of 2 UvrA and 2 UvrB subunits scans DNA for abnormalities. Upon binding of the UvrA(2)B(2) complex to a putative damaged site, the DNA wraps around one UvrB monomer. DNA wrap is dependent on ATP binding by UvrB and probably causes local melting of the DNA helix, facilitating insertion of UvrB beta-hairpin between the DNA strands. Then UvrB probes one DNA strand for the presence of a lesion. If a lesion is found the UvrA subunits dissociate and the UvrB-DNA preincision complex is formed. This complex is subsequently bound by UvrC and the second UvrB is released. If no lesion is found, the DNA wraps around the other UvrB subunit that will check the other stand for damage. The polypeptide is UvrABC system protein B (Bacteroides thetaiotaomicron (strain ATCC 29148 / DSM 2079 / JCM 5827 / CCUG 10774 / NCTC 10582 / VPI-5482 / E50)).